Here is a 401-residue protein sequence, read N- to C-terminus: MNKHIEQLYRSAKKRSRLIIGLMSGTSLDGLDVALCRIEGHGTDTQIELVAFCTVDYDDGYKQKIKSVFAKRQVDLQQVTLLNPWVGVLHGQMVNQCLEKWNIAATDIDAIASHGQTIYHCPLGQHGQSEFGNATLQIGDADHLAVTTGILTIGDFRQKHIAAGGEGAPLAVYGDYLFFTSKQENRILLNMGGIANLTFLPCSADASAVFSSDIGPGNTIMDAYVQRHFSPLHYDKDSAMASQGKVHLGLLDSLLEHAFFALDFPKTTGPEVFNLDYLSVAQAHSATRQLAHEDVLATLNLFSARTIANAINDAAIELEEFNVYASGGGIHNPLLMEHILRLCPNVTAIQDTSKLGIDPDAKEAVLFAILANECLVGGQQPFGNLEQGIPNITMGKISFPD.

Gly25 to Asp32 is a binding site for ATP.

This sequence belongs to the anhydro-N-acetylmuramic acid kinase family.

The enzyme catalyses 1,6-anhydro-N-acetyl-beta-muramate + ATP + H2O = N-acetyl-D-muramate 6-phosphate + ADP + H(+). It participates in amino-sugar metabolism; 1,6-anhydro-N-acetylmuramate degradation. Its pathway is cell wall biogenesis; peptidoglycan recycling. Functionally, catalyzes the specific phosphorylation of 1,6-anhydro-N-acetylmuramic acid (anhMurNAc) with the simultaneous cleavage of the 1,6-anhydro ring, generating MurNAc-6-P. Is required for the utilization of anhMurNAc either imported from the medium or derived from its own cell wall murein, and thus plays a role in cell wall recycling. The protein is Anhydro-N-acetylmuramic acid kinase of Pseudoalteromonas atlantica (strain T6c / ATCC BAA-1087).